Consider the following 263-residue polypeptide: 3-deoxy-manno-octulosonate cytidylyltransferase 2 (263 aa).

This sequence belongs to the KdsB family.

The protein resides in the cytoplasm. The enzyme catalyses 3-deoxy-alpha-D-manno-oct-2-ulosonate + CTP = CMP-3-deoxy-beta-D-manno-octulosonate + diphosphate. It participates in nucleotide-sugar biosynthesis; CMP-3-deoxy-D-manno-octulosonate biosynthesis; CMP-3-deoxy-D-manno-octulosonate from 3-deoxy-D-manno-octulosonate and CTP: step 1/1. The protein operates within bacterial outer membrane biogenesis; lipopolysaccharide biosynthesis. Activates KDO (a required 8-carbon sugar) for incorporation into bacterial lipopolysaccharide in Gram-negative bacteria. In Paraburkholderia phytofirmans (strain DSM 17436 / LMG 22146 / PsJN) (Burkholderia phytofirmans), this protein is 3-deoxy-manno-octulosonate cytidylyltransferase 2.